The chain runs to 625 residues: Complex I assembly factor ACAD9, mitochondrial (625 aa).

The N-terminal 41 residues, 1 to 41 (MSGYVLFSRGATAAAAAARASRVLRVFTERRRTLHTSLQSC), are a transit peptide targeting the mitochondrion. Residue lysine 45 is modified to N6-acetyllysine. Lysine 96 bears the N6-succinyllysine mark. The active-site Proton acceptor is glutamate 430. Threonine 482 carries the phosphothreonine modification. Lysine 525 is subject to N6-acetyllysine; alternate. Lysine 525 carries the post-translational modification N6-succinyllysine; alternate.

It belongs to the acyl-CoA dehydrogenase family. As to quaternary structure, homodimer. Interacts with NDUFAF1 and ECSIT. Part of the mitochondrial complex I assembly/MCIA complex that comprises at least the core subunits TMEM126B, NDUFAF1, ECSIT and ACAD9 and complement subunits such as COA1 and TMEM186. Interacts with TMEM70 and TMEM242. FAD is required as a cofactor.

The protein localises to the mitochondrion inner membrane. The catalysed reaction is eicosanoyl-CoA + oxidized [electron-transfer flavoprotein] + H(+) = (2E)-eicosenoyl-CoA + reduced [electron-transfer flavoprotein]. The enzyme catalyses octadecanoyl-CoA + oxidized [electron-transfer flavoprotein] + H(+) = (2E)-octadecenoyl-CoA + reduced [electron-transfer flavoprotein]. It catalyses the reaction oxidized [electron-transfer flavoprotein] + hexadecanoyl-CoA + H(+) = (2E)-hexadecenoyl-CoA + reduced [electron-transfer flavoprotein]. It carries out the reaction decanoyl-CoA + oxidized [electron-transfer flavoprotein] + H(+) = (2E)-decenoyl-CoA + reduced [electron-transfer flavoprotein]. The catalysed reaction is nonanoyl-CoA + oxidized [electron-transfer flavoprotein] + H(+) = (2E)-nonenoyl-CoA + reduced [electron-transfer flavoprotein]. The enzyme catalyses pentadecanoyl-CoA + oxidized [electron-transfer flavoprotein] + H(+) = (2E)-pentadecenoyl-CoA + reduced [electron-transfer flavoprotein]. It catalyses the reaction undecanoyl-CoA + oxidized [electron-transfer flavoprotein] + H(+) = trans-2-undecenoyl-CoA + reduced [electron-transfer flavoprotein]. It carries out the reaction (9Z)-hexadecenoyl-CoA + oxidized [electron-transfer flavoprotein] + H(+) = (2E,9Z)-hexadecadienoyl-CoA + reduced [electron-transfer flavoprotein]. The catalysed reaction is heptadecanoyl-CoA + oxidized [electron-transfer flavoprotein] + H(+) = trans-2-heptadecenoyl-CoA + reduced [electron-transfer flavoprotein]. The enzyme catalyses (9E)-octadecenoyl-CoA + oxidized [electron-transfer flavoprotein] + H(+) = (2E,9E)-octadecadienoyl-CoA + reduced [electron-transfer flavoprotein]. It catalyses the reaction oxidized [electron-transfer flavoprotein] + (9Z)-octadecenoyl-CoA + H(+) = (2E,9Z)-octadecadienoyl-CoA + reduced [electron-transfer flavoprotein]. It carries out the reaction (9Z,12Z)-octadecadienoyl-CoA + oxidized [electron-transfer flavoprotein] + H(+) = (2E,9Z,12Z)-octadecatrienoyl-CoA + reduced [electron-transfer flavoprotein]. The catalysed reaction is (4Z,7Z,10Z,13Z,16Z,19Z)-docosahexaenoyl-CoA + oxidized [electron-transfer flavoprotein] + H(+) = (2E,4Z,7Z,10Z,13Z,16Z,19Z)-docosaheptaenoyl-CoA + reduced [electron-transfer flavoprotein]. The enzyme catalyses tetradecanoyl-CoA + oxidized [electron-transfer flavoprotein] + H(+) = (2E)-tetradecenoyl-CoA + reduced [electron-transfer flavoprotein]. In terms of biological role, as part of the MCIA complex, primarily participates in the assembly of the mitochondrial complex I and therefore plays a role in oxidative phosphorylation. This moonlighting protein also has a dehydrogenase activity toward a broad range of substrates with greater specificity for long-chain unsaturated acyl-CoAs. However, in vivo, it does not seem to play a primary role in fatty acid oxidation. In addition, the function in complex I assembly is independent of the dehydrogenase activity of the protein. This chain is Complex I assembly factor ACAD9, mitochondrial, found in Rattus norvegicus (Rat).